Here is a 262-residue protein sequence, read N- to C-terminus: Dihydroorotate dehydrogenase B (NAD(+)), electron transfer subunit (262 aa).

Residues 3–104 form the FAD-binding FR-type domain; it reads QLQEMMTVVS…MGPLGNGFPV (102 aa). FAD is bound by residues 53 to 56, 70 to 72, and 79 to 80; these read RPIS, LYR, and GT. Residues cysteine 226, cysteine 231, cysteine 234, and cysteine 249 each coordinate [2Fe-2S] cluster.

This sequence belongs to the PyrK family. As to quaternary structure, heterotetramer of 2 PyrK and 2 PyrD type B subunits. [2Fe-2S] cluster serves as cofactor. Requires FAD as cofactor.

It functions in the pathway pyrimidine metabolism; UMP biosynthesis via de novo pathway; orotate from (S)-dihydroorotate (NAD(+) route): step 1/1. In terms of biological role, responsible for channeling the electrons from the oxidation of dihydroorotate from the FMN redox center in the PyrD type B subunit to the ultimate electron acceptor NAD(+). The chain is Dihydroorotate dehydrogenase B (NAD(+)), electron transfer subunit from Lactococcus lactis subsp. cremoris (strain SK11).